A 129-amino-acid polypeptide reads, in one-letter code: uncharacterized protein (129 aa).

It is found in the cytoplasm. It localises to the cytosol. Its subcellular location is the nucleus. This is an uncharacterized protein from Schizosaccharomyces pombe (strain 972 / ATCC 24843) (Fission yeast).